Consider the following 2098-residue polypeptide: Non-reducing polyketide synthase crz7 (2098 aa).

The region spanning 8–243 (ILFGDQTVDP…IKLPITAAFH (236 aa)) is the Starter acyltransferase (SAT) domain. The Ketosynthase family 3 (KS3) domain maps to 364 to 789 (SSDIAIIGFA…GGNTSLLLED (426 aa)). Active-site for beta-ketoacyl synthase activity residues include C532, H667, and H706. Positions 887–1211 (IFLFTGQGSQ…IANAYNSGVK (325 aa)) constitute a Malonyl-CoA:ACP transacylase (MAT) domain. The N-terminal hotdog fold stretch occupies residues 1270–1404 (TCLQGVENET…CTVMYGDGQQ (135 aa)). Positions 1270-1578 (TCLQGVENET…FQQMKRTTLQ (309 aa)) constitute a PKS/mFAS DH domain. The Proton acceptor; for dehydratase activity role is filled by H1305. A C-terminal hotdog fold region spans residues 1431–1578 (IHRMLKEMIY…FQQMKRTTLQ (148 aa)). The active-site Proton donor; for dehydratase activity is D1491. In terms of domain architecture, Carrier 1 spans 1613-1690 (QSPSAGFSKV…ELRAFFLDKM (78 aa)). O-(pantetheine 4'-phosphoryl)serine is present on S1650. Residues 1693-1725 (PQATANDDDSDDSSEDEDPGYSRSQSNSTISTP) are disordered. Residues 1698–1711 (NDDDSDDSSEDEDP) show a composition bias toward acidic residues. Over residues 1714-1724 (SRSQSNSTIST) the composition is skewed to polar residues. The 78-residue stretch at 1725 to 1802 (PEEPDVVSIL…DVQKALGPTS (78 aa)) folds into the Carrier 2 domain. S1762 carries the post-translational modification O-(pantetheine 4'-phosphoryl)serine. The thioesterase (TE) domain stretch occupies residues 1844-2080 (LFLLPDGAGS…VSGNHFSIMF (237 aa)).

Pantetheine 4'-phosphate is required as a cofactor.

It participates in secondary metabolite biosynthesis. Non-reducing polyketide synthase; part of the gene cluster that mediates the biosynthesis of the red pigment cristazarin, a naphthazarin derivative. The polyketide product of crz7 is likely 2-acetyl-1,3,6,8-tetrahydoxynaphthalene (AT4HN) from which a probable biosynthetic route of cristazarin can be deduced. The presence of two O-methyltransferases (crz1 and crz2), an enoyl reductase (crz5), an oxidase (crz8), and a short-chain dehydrogenase (crz9) encoded in the cristazarin biosynthetic cluster is consistent with methylation of a hydroxyl group, addition of two hydroxyl groups to the naphthalene core ring, and reduction of the acetyl side chain. This is Non-reducing polyketide synthase crz7 from Cladonia metacorallifera (Lichen-forming fungus).